The following is a 432-amino-acid chain: MAGQTIIVSGLNPAAILQSTIGGGASPTAAAAENGTRKVIPLSRDALQDFMLSIITQKLQDEKQPFYVLDLGEVVSLIDQWKSALPNIRPFYAVKCNPEPSFLSILSAMGSNFDCASRAEIEYVLSLGISPDRIVFANPCKPESDIIFAAKVGVNLTTYDSEDEVYKIRKHHPKSELLLRIKPMFDGNARCPMGPKYGALPEEVEPLLRAAQAARLTVSGVSFHIGSGDADSNAYLGAIAAAKEVFETAAKLGMSKMTVLDVGGGFTSGHQFTTAAVAVRSALKQHFDDQPELTIIAEPGRFFAETAFTLATTIIGKRVRGELREYWINDGLYGSMNCVLYDHATVNATPLAVLSNRTNVTCGGSKTFPTTVFGPTCDALDTVLRDYQLPELQVNDWLVFPNMGAYTKAAGSNFNGFNTSAIVTHLAYAYPS.

Lys95 is modified (N6-(pyridoxal phosphate)lysine). Residues Ser227, Gly265, and Glu298–Arg301 contribute to the pyridoxal 5'-phosphate site. Tyr341–Asp342 contacts substrate. Residue Cys377 is the Proton donor; shared with dimeric partner of the active site. Substrate is bound at residue Asp378. Tyr406 serves as a coordination point for pyridoxal 5'-phosphate.

Belongs to the Orn/Lys/Arg decarboxylase class-II family. In terms of assembly, homodimer. Only the dimer is catalytically active, as the active sites are constructed of residues from both monomers. Requires pyridoxal 5'-phosphate as cofactor.

The protein resides in the plastid. The protein localises to the chloroplast. It carries out the reaction L-ornithine + H(+) = putrescine + CO2. The protein operates within alkaloid biosynthesis; nicotine biosynthesis. It participates in amine and polyamine biosynthesis; putrescine biosynthesis via L-ornithine pathway; putrescine from L-ornithine: step 1/1. Involved in the biosynthesis of pyridine alkaloid natural products, leading mainly to the production of anabasine, anatabine, nicotine and nornicotine, effective deterrents against herbivores with antiparasitic and pesticide properties (neurotoxins); nornicotine serves as the precursor in the synthesis of the carcinogen compound N'-nitrosonornicotine (NNN). Catalyzes the first and rate-limiting step of polyamine biosynthesis that converts ornithine into putrescine, which is the precursor for the polyamines, spermidine and spermine. Polyamines are essential for cell proliferation and are implicated in cellular processes, ranging from DNA replication to apoptosis. This chain is Ornithine decarboxylase 1A, chloroplastic, found in Nicotiana tabacum (Common tobacco).